The primary structure comprises 223 residues: uncharacterized protein (223 aa).

The interval 40 to 70 is disordered; that stretch reads GSKRLKPAKFGTEGKERVEQRTERQRTGSSK. The span at 51-70 shows a compositional bias: basic and acidic residues; it reads TEGKERVEQRTERQRTGSSK.

This is an uncharacterized protein from Homo sapiens (Human).